Reading from the N-terminus, the 225-residue chain is RNA chaperone ProQ (225 aa).

The disordered stretch occupies residues 103 to 173 (LEEAKARVQT…APREERHTPV (71 aa)). Residues 109–118 (RVQTQRAAQQ) are compositionally biased toward low complexity. A compositionally biased stretch (basic residues) spans 137 to 146 (RERKPRPQQP). The segment covering 147-156 (RRKEGAEQRK) has biased composition (basic and acidic residues).

It belongs to the ProQ family.

The protein localises to the cytoplasm. RNA chaperone with significant RNA binding, RNA strand exchange and RNA duplexing activities. May regulate ProP activity through an RNA-based, post-transcriptional mechanism. The chain is RNA chaperone ProQ from Klebsiella pneumoniae (strain 342).